The primary structure comprises 176 residues: Sperm-egg fusion protein TMEM95 (176 aa).

A signal peptide spans 1–16; the sequence is MWRLALGGVFLAAAQA. 4 disulfide bridges follow: C17-C118, C20-C121, C105-C128, and C109-C134. Residues 17–145 lie on the Extracellular side of the membrane; that stretch reads CVFCRLPAHD…PGSQDLWEAK (129 aa). Residues 146–166 traverse the membrane as a helical segment; it reads ILLLSIFGAFLLLGVLSLLVE. Residues 167–176 are Cytoplasmic-facing; it reads SHHLQAKSGL.

It belongs to the TMEM95 family. In terms of assembly, does not interact with sperm-egg fusion proteins IZUMO1 or IZUMO1R/JUNO. N-glycosylated. As to expression, spermatozoa (at protein level).

Its subcellular location is the cytoplasmic vesicle. The protein resides in the secretory vesicle. It localises to the acrosome membrane. Functionally, sperm protein required for fusion of sperm with the egg membrane during fertilization. The protein is Sperm-egg fusion protein TMEM95 of Homo sapiens (Human).